The primary structure comprises 1026 residues: Multidrug resistance protein MdtC (1026 aa).

The next 11 membrane-spanning stretches (helical) occupy residues 15–35 (ILIA…LPVA), 333–353 (EVEE…FLFL), 360–380 (LIPA…MYLC), 387–407 (LSLM…IVVL), 431–451 (VGFT…PLLL), 463–483 (FAVT…TLTP), 528–548 (LVGV…IAIP), 853–873 (LILI…LYES), 897–917 (LFNA…IGIV), 953–973 (PIMM…LSDG), and 984–1004 (ITIV…TPVV).

It belongs to the resistance-nodulation-cell division (RND) (TC 2.A.6) family. MdtC subfamily. Part of a tripartite efflux system composed of MdtA, MdtB and MdtC. MdtC forms a heteromultimer with MdtB.

It localises to the cell inner membrane. The polypeptide is Multidrug resistance protein MdtC (Salmonella heidelberg (strain SL476)).